A 697-amino-acid polypeptide reads, in one-letter code: Elongation factor G 2 (697 aa).

In terms of domain architecture, tr-type G spans S5–V280. GTP contacts are provided by residues A14–T21, D78–H82, and N132–D135.

The protein belongs to the TRAFAC class translation factor GTPase superfamily. Classic translation factor GTPase family. EF-G/EF-2 subfamily.

It localises to the cytoplasm. In terms of biological role, catalyzes the GTP-dependent ribosomal translocation step during translation elongation. During this step, the ribosome changes from the pre-translocational (PRE) to the post-translocational (POST) state as the newly formed A-site-bound peptidyl-tRNA and P-site-bound deacylated tRNA move to the P and E sites, respectively. Catalyzes the coordinated movement of the two tRNA molecules, the mRNA and conformational changes in the ribosome. This is Elongation factor G 2 from Shewanella frigidimarina (strain NCIMB 400).